The chain runs to 266 residues: Zinc transporter ZupT (266 aa).

The next 8 helical transmembrane spans lie at 8–28, 36–56, 71–91, 123–143, 152–172, 185–205, 209–229, and 246–266; these read LLLT…ALAV, LALS…MEII, AGAW…WAID, GIFT…AVFF, GIVI…AVAV, FSLS…GYTL, FLTP…MVYI, and LAIT…LLLT. Fe(2+)-binding residues include Asn134 and Glu137. The Zn(2+) site is built by Glu137 and His162. Positions 163, 166, and 195 each coordinate Fe(2+). Residue Glu166 coordinates Zn(2+).

This sequence belongs to the ZIP transporter (TC 2.A.5) family. ZupT subfamily.

The protein localises to the cell inner membrane. The enzyme catalyses Zn(2+)(in) = Zn(2+)(out). In terms of biological role, mediates zinc uptake. May also transport other divalent cations. This is Zinc transporter ZupT from Chlorobium luteolum (strain DSM 273 / BCRC 81028 / 2530) (Pelodictyon luteolum).